The following is a 277-amino-acid chain: Protein OPG166 (277 aa).

Residues Asn-29 and Asn-58 are each glycosylated (N-linked (GlcNAc...) asparagine; by host). 5 helical membrane-spanning segments follow: residues 124–144, 156–176, 186–206, 219–239, and 247–267; these read TMLMFIFTGITLFLLFLEITY, GILQVFGCVIAMIELCGAFLF, IIGLLMMTLPSIFLIITKVFS, LIIYYQLAGYILTVLGLGLSL, and LLLSGLGTIMVSEHFSLLFLV.

This sequence belongs to the orthopoxvirus OPG166 protein family.

The protein resides in the host membrane. Promotes, when overexpressed, the influx of extracellular Ca(2+), leading to membrane permeability and host cell necrosis. This Vaccinia virus (strain Copenhagen) (VACV) protein is Protein OPG166 (OPG166).